The following is a 119-amino-acid chain: Flagellar transcriptional regulator FlhD (119 aa).

It belongs to the FlhD family. Homodimer; disulfide-linked. Forms a heterohexamer composed of two FlhC and four FlhD subunits. Each FlhC binds a FlhD dimer, forming a heterotrimer, and a hexamer assembles by dimerization of two heterotrimers.

Its subcellular location is the cytoplasm. Functionally, functions in complex with FlhC as a master transcriptional regulator that regulates transcription of several flagellar and non-flagellar operons by binding to their promoter region. Activates expression of class 2 flagellar genes, including fliA, which is a flagellum-specific sigma factor that turns on the class 3 genes. Also regulates genes whose products function in a variety of physiological pathways. This is Flagellar transcriptional regulator FlhD from Shigella boydii serotype 4 (strain Sb227).